We begin with the raw amino-acid sequence, 407 residues long: RING finger protein 44 (407 aa).

The disordered stretch occupies residues 26–58; it reads LSSSPGQLWGRPSNLSVEEHRASAPAGRSPRML. The RING-type; atypical zinc finger occupies 355-396; the sequence is CVVCFSDFEVRQLLRVLPCNHEFHAKCVDKWLKANRTCPICR.

The protein is RING finger protein 44 (Rnf44) of Mus musculus (Mouse).